A 61-amino-acid polypeptide reads, in one-letter code: Photosystem II reaction center protein K (61 aa).

Residues 1–24 (MINIVSLVCIYINSVPYSSIFFLD) constitute a propeptide that is removed on maturation. Residues 36-56 (IVDIMPVIPLFFFLLAFVWQA) form a helical membrane-spanning segment.

This sequence belongs to the PsbK family. In terms of assembly, PSII is composed of 1 copy each of membrane proteins PsbA, PsbB, PsbC, PsbD, PsbE, PsbF, PsbH, PsbI, PsbJ, PsbK, PsbL, PsbM, PsbT, PsbX, PsbY, PsbZ, Psb30/Ycf12, at least 3 peripheral proteins of the oxygen-evolving complex and a large number of cofactors. It forms dimeric complexes.

Its subcellular location is the plastid. The protein resides in the chloroplast thylakoid membrane. Functionally, one of the components of the core complex of photosystem II (PSII). PSII is a light-driven water:plastoquinone oxidoreductase that uses light energy to abstract electrons from H(2)O, generating O(2) and a proton gradient subsequently used for ATP formation. It consists of a core antenna complex that captures photons, and an electron transfer chain that converts photonic excitation into a charge separation. This is Photosystem II reaction center protein K from Lotus japonicus (Lotus corniculatus var. japonicus).